The chain runs to 336 residues: Ankyrin repeat and SOCS box protein 1 (336 aa).

ANK repeat units follow at residues cysteine 37–glutamate 69, leucine 78–leucine 107, lysine 111–glycine 140, histidine 144–valine 173, leucine 192–phenylalanine 221, and serine 236–leucine 266. Positions leucine 287–glutamate 336 constitute an SOCS box domain.

It belongs to the ankyrin SOCS box (ASB) family. Interacts with CUL5 and RNF7. As to expression, highest expression in testis, spleen, bone marrow and salivary gland.

It participates in protein modification; protein ubiquitination. Its function is as follows. Probable substrate-recognition component of a SCF-like ECS (Elongin-Cullin-SOCS-box protein) E3 ligase complex which mediates the ubiquitination and subsequent proteasomal degradation of target proteins. Mediates Notch-induced ubiquitination and degradation of TCF3/E2A and JAK2. May play a role in testis development. The polypeptide is Ankyrin repeat and SOCS box protein 1 (Asb1) (Mus musculus (Mouse)).